The primary structure comprises 455 residues: Ribosomal protein uS12 methylthiotransferase RimO (455 aa).

The 111-residue stretch at 10–120 (PKVGMVSLGC…VVEAVHDAAP (111 aa)) folds into the MTTase N-terminal domain. The [4Fe-4S] cluster site is built by Cys-19, Cys-55, Cys-84, Cys-151, Cys-155, and Cys-158. The Radical SAM core domain maps to 137–380 (LTPRHYSYLK…MAKTAAISAA (244 aa)). The 73-residue stretch at 383-455 (EAKIGRTLPV…DEHDLFGVVT (73 aa)) folds into the TRAM domain.

This sequence belongs to the methylthiotransferase family. RimO subfamily. The cofactor is [4Fe-4S] cluster.

It is found in the cytoplasm. It catalyses the reaction L-aspartate(89)-[ribosomal protein uS12]-hydrogen + (sulfur carrier)-SH + AH2 + 2 S-adenosyl-L-methionine = 3-methylsulfanyl-L-aspartate(89)-[ribosomal protein uS12]-hydrogen + (sulfur carrier)-H + 5'-deoxyadenosine + L-methionine + A + S-adenosyl-L-homocysteine + 2 H(+). In terms of biological role, catalyzes the methylthiolation of an aspartic acid residue of ribosomal protein uS12. The chain is Ribosomal protein uS12 methylthiotransferase RimO from Sphingopyxis alaskensis (strain DSM 13593 / LMG 18877 / RB2256) (Sphingomonas alaskensis).